The chain runs to 209 residues: uncharacterized protein (209 aa).

A coiled-coil region spans residues 13–75 (LSAVDKQMDT…AINLAAVMTD (63 aa)). Positions 107-135 (ATPLPSSNTNNEQSMSTYSSSISGKTSET) are disordered. The span at 110-119 (LPSSNTNNEQ) shows a compositional bias: polar residues. The span at 120–133 (SMSTYSSSISGKTS) shows a compositional bias: low complexity.

Belongs to the asfivirus K205R family.

It localises to the host cytoplasm. Functionally, induces host endoplasmic reticulum stress and consequently activates autophagy and NF-kappa-B signaling pathway. In turn, may induce autophagy-mediated STING1 degradation and innate immune evasion. This is an uncharacterized protein from Ornithodoros (relapsing fever ticks).